Here is a 467-residue protein sequence, read N- to C-terminus: Protein PHOSPHATE STARVATION RESPONSE 3 (467 aa).

The interval 227 to 266 is disordered; that stretch reads MSLPVSSCSDQEDLQDARSPAKVQLSSSRSSSGTASCNKP. The HTH myb-type domain occupies 262 to 322; that stretch reads SCNKPRLRWT…HLQKYRLAKY (61 aa). The H-T-H motif DNA-binding region spans 293 to 318; sequence PKGVLKLMKVEGLTIYHIKSHLQKYR. Over residues 327 to 337 the composition is skewed to basic and acidic residues; sequence KEDKKQEEKKT. Disordered stretches follow at residues 327–353 and 400–467; these read KEDK…KSAQ and RESI…VHDE. Residues 402–412 show a composition bias toward polar residues; that stretch reads SISSMTSTTEG. Composition is skewed to basic and acidic residues over residues 419 to 428 and 438 to 467; these read PMEKTEDKAE and RITD…VHDE.

It localises to the nucleus. In terms of biological role, transcription factor involved in phosphate starvation signaling. Binds to P1BS, an imperfect palindromic sequence 5'-GNATATNC-3', to promote the expression of inorganic phosphate (Pi) starvation-responsive genes. Functionally redundant with PHR1 and PHR2 in regulating Pi starvation response and Pi homeostasis. The sequence is that of Protein PHOSPHATE STARVATION RESPONSE 3 from Oryza sativa subsp. indica (Rice).